Consider the following 548-residue polypeptide: Chaperonin GroEL (548 aa).

Residues T30 to P33, K51, D87 to T91, G415, N479 to A481, and D495 each bind ATP. The interval R526–M548 is disordered. The segment covering G539–M548 has biased composition (gly residues).

This sequence belongs to the chaperonin (HSP60) family. In terms of assembly, forms a cylinder of 14 subunits composed of two heptameric rings stacked back-to-back. Interacts with the co-chaperonin GroES.

The protein resides in the cytoplasm. The enzyme catalyses ATP + H2O + a folded polypeptide = ADP + phosphate + an unfolded polypeptide.. Functionally, together with its co-chaperonin GroES, plays an essential role in assisting protein folding. The GroEL-GroES system forms a nano-cage that allows encapsulation of the non-native substrate proteins and provides a physical environment optimized to promote and accelerate protein folding. The protein is Chaperonin GroEL of Buchnera aphidicola subsp. Schizaphis graminum (strain Sg).